A 452-amino-acid chain; its full sequence is Elongation factor Tu, mitochondrial (452 aa).

A mitochondrion-targeting transit peptide spans 1–43 (MAAATLLRATPRFSGLCASPTPFLQGRLRPLKAPASPFLCRGL). One can recognise a tr-type G domain in the interval 55–251 (KPHVNVGTIG…AVDTYIPVPT (197 aa)). The interval 64–71 (GHVDHGKT) is G1. Residues Asp-67, Gly-69, Lys-70, Thr-71, and Thr-72 each coordinate GTP. Thr-71 lines the Mg(2+) pocket. Lys-79 bears the N6-acetyllysine mark. Lys-88 is modified (N6-acetyllysine; alternate). Lys-88 carries the post-translational modification N6-succinyllysine; alternate. The segment at 105-109 (GITIN) is G2. The interval 126–129 (DCPG) is G3. 5 residues coordinate GTP: Asn-181, Asp-184, Ser-219, Ala-220, and Leu-221. The G4 stretch occupies residues 181 to 184 (NKAD). The G5 stretch occupies residues 219–221 (SAL). Lys-234 carries the post-translational modification N6-succinyllysine. Residue Lys-256 is modified to N6-acetyllysine. A Phosphothreonine modification is found at Thr-278. N6-succinyllysine is present on Lys-286. Ser-312 carries the phosphoserine modification. Lys-361 and Lys-418 each carry N6-acetyllysine.

It belongs to the TRAFAC class translation factor GTPase superfamily. Classic translation factor GTPase family. EF-Tu/EF-1A subfamily. In terms of assembly, interacts with NLRX1. Interacts with ATG16L1.

It is found in the mitochondrion. It carries out the reaction GTP + H2O = GDP + phosphate + H(+). GTP hydrolase that promotes the GTP-dependent binding of aminoacyl-tRNA to the A-site of ribosomes during protein biosynthesis. Plays a role in the regulation of autophagy and innate immunity. Recruits ATG5-ATG12 and NLRX1 at mitochondria and serves as a checkpoint of the RIGI-MAVS pathway. In turn, inhibits RLR-mediated type I interferon while promoting autophagy. The sequence is that of Elongation factor Tu, mitochondrial from Rattus norvegicus (Rat).